Consider the following 350-residue polypeptide: S-adenosylmethionine:tRNA ribosyltransferase-isomerase (350 aa).

Belongs to the QueA family. Monomer.

The protein resides in the cytoplasm. The enzyme catalyses 7-aminomethyl-7-carbaguanosine(34) in tRNA + S-adenosyl-L-methionine = epoxyqueuosine(34) in tRNA + adenine + L-methionine + 2 H(+). It functions in the pathway tRNA modification; tRNA-queuosine biosynthesis. In terms of biological role, transfers and isomerizes the ribose moiety from AdoMet to the 7-aminomethyl group of 7-deazaguanine (preQ1-tRNA) to give epoxyqueuosine (oQ-tRNA). This is S-adenosylmethionine:tRNA ribosyltransferase-isomerase from Saccharophagus degradans (strain 2-40 / ATCC 43961 / DSM 17024).